The following is a 100-amino-acid chain: Urease subunit gamma (100 aa).

It belongs to the urease gamma subunit family. In terms of assembly, heterotrimer of UreA (gamma), UreB (beta) and UreC (alpha) subunits. Three heterotrimers associate to form the active enzyme.

The protein localises to the cytoplasm. It catalyses the reaction urea + 2 H2O + H(+) = hydrogencarbonate + 2 NH4(+). Its pathway is nitrogen metabolism; urea degradation; CO(2) and NH(3) from urea (urease route): step 1/1. The protein is Urease subunit gamma of Burkholderia multivorans (strain ATCC 17616 / 249).